A 908-amino-acid chain; its full sequence is MKSSVAQIKPSSGHDRRENLNSYQRNSSPEDRYEEQERSPRDRDYFDYSRSDYEHSRRGRSYDSSMESRNRDREKRRERERDTDRKRSRKSPSPGRRNPETSVTQSSSAQDEPATKKKKDELDPLLTRTGGAYIPPAKLRMMQEQITDKNSLAYQRMSWEALKKSINGLINKVNISNISIIIQELLQENIVRGRGLLSRSVLQAQSASPIFTHVYAALVAIINSKFPQIGELILKRLILNFRKGYRRNDKQLCLTASKFVAHLINQNVAHEVLCLEMLTLLLERPTDDSVEVAIGFLKECGLKLTQVSPRGINAIFERLRNILHESEIDKRVQYMIEVMFAVRKDGFKDHPIILEGLDLVEEDDQFTHMLPLEDDYNPEDVLNVFKMDPNFMENEEKYKAIKKEILDEGDTDSNTDQDAGSSEEDEEEEEEEGEEDEEGQKVTIHDKTEINLVSFRRTIYLAIQSSLDFEECAHKLLKMEFPESQTKELCNMILDCCAQQRTYEKFFGLLAGRFCMLKKEYMESFEGIFKEQYDTIHRLETNKLRNVAKMFAHLLYTDSLPWSVLECIKLSEETTTSSSRIFVKIFFQELCEYMGLPKLNARLKDETLQPFFEGLLPRDNPRNTRFAINFFTSIGLGGLTDELREHLKNTPKVIVAQKPDVEQNKSSPSSSSSASSSSESDSSDSDSDSSDSSSESSSEESDSSSISSHSSASANDVRKKGHGKTRSKEVDKLIRNQQTNDRKQKERRQEHGHQETRTERERRSEKHRDQNSSGSNWRDPITKYTSDKDVPSERNNYSRVANDRDQEMHIDLENKHGDPKKKRGERRNSFSENEKHTHRIKDSENFRRKDRSKSKEMNRKHSGSRSDEDRYQNGAERRWEKSSRYSEQSRESKKNQDRRREKSPAKQK.

Residues 1–10 (MKSSVAQIKP) show a composition bias toward polar residues. A disordered region spans residues 1–129 (MKSSVAQIKP…DELDPLLTRT (129 aa)). The segment covering 28–56 (SPEDRYEEQERSPRDRDYFDYSRSDYEHS) has biased composition (basic and acidic residues). A phosphoserine mark is found at Ser-39 and Ser-61. Residues 66–85 (MESRNRDREKRRERERDTDR) are compositionally biased toward basic and acidic residues. Polar residues predominate over residues 100 to 110 (ETSVTQSSSAQ). Residue Ser-107 is modified to Phosphoserine. The segment covering 113–122 (PATKKKKDEL) has biased composition (basic and acidic residues). The 184-residue stretch at 163–346 (KKSINGLINK…EVMFAVRKDG (184 aa)) folds into the MIF4G domain. The disordered stretch occupies residues 404–443 (EILDEGDTDSNTDQDAGSSEEDEEEEEEEGEEDEEGQKVT). A compositionally biased stretch (acidic residues) spans 407-438 (DEGDTDSNTDQDAGSSEEDEEEEEEEGEEDEE). The MI domain maps to 454–570 (SFRRTIYLAI…PWSVLECIKL (117 aa)). The segment at 654–908 (IVAQKPDVEQ…RREKSPAKQK (255 aa)) is disordered. 2 stretches are compositionally biased toward low complexity: residues 666–680 (SSPS…SSES) and 703–714 (SSSISSHSSASA). Basic and acidic residues predominate over residues 726-770 (RSKEVDKLIRNQQTNDRKQKERRQEHGHQETRTERERRSEKHRDQ). Ser-786 carries the phosphoserine modification. 2 stretches are compositionally biased toward basic and acidic residues: residues 801–817 (ANDR…NKHG) and 826–908 (RRNS…AKQK). Ser-829 carries the post-translational modification Phosphoserine.

This sequence belongs to the CWC22 family. As to quaternary structure, component of the pre-catalytic spliceosome B and the catalytic spliceosome C complexes. Component of the minor spliceosome, which splices U12-type introns. Interacts with EIF4A3 and PRPF19 in an RNA-independent manner. Direct interaction with EIF4A3 is mediated by the MIF4G domain. Full interaction with EIF4A3 occurs only when EIF4A3 is not part of the EJC and prevents EIF4A3 binding to RNA.

The protein resides in the nucleus. It localises to the nucleus speckle. Functionally, required for pre-mRNA splicing as component of the spliceosome. As a component of the minor spliceosome, involved in the splicing of U12-type introns in pre-mRNAs. Promotes exon-junction complex (EJC) assembly. Hinders EIF4A3 from non-specifically binding RNA and escorts it to the splicing machinery to promote EJC assembly on mature mRNAs. Through its role in EJC assembly, required for nonsense-mediated mRNA decay. In Homo sapiens (Human), this protein is Pre-mRNA-splicing factor CWC22 homolog (CWC22).